An 88-amino-acid chain; its full sequence is Protein transport protein SBH2 (88 aa).

The tract at residues M1–S42 is disordered. Residues M1–S61 are Cytoplasmic-facing. Residues K28–S42 are compositionally biased toward polar residues. A helical transmembrane segment spans residues L62–T82.

It belongs to the SEC61-beta family. As to quaternary structure, component of the heterotrimeric Ssh1 complex, which is composed of SSH1, SBH2 and SSS1.

It is found in the endoplasmic reticulum membrane. Its function is as follows. Part of the Ssh1 complex, which probably is the major component of a channel-forming translocon complex that may function exclusively in the cotranslational pathway of protein endoplasmic reticulum (ER) import. In Saccharomyces cerevisiae (strain ATCC 204508 / S288c) (Baker's yeast), this protein is Protein transport protein SBH2 (SBH2).